Consider the following 265-residue polypeptide: Hydroxyethylthiazole kinase (265 aa).

M50 is a binding site for substrate. ATP is bound by residues R125 and T171. G198 provides a ligand contact to substrate.

It belongs to the Thz kinase family. Requires Mg(2+) as cofactor.

It catalyses the reaction 5-(2-hydroxyethyl)-4-methylthiazole + ATP = 4-methyl-5-(2-phosphooxyethyl)-thiazole + ADP + H(+). It participates in cofactor biosynthesis; thiamine diphosphate biosynthesis; 4-methyl-5-(2-phosphoethyl)-thiazole from 5-(2-hydroxyethyl)-4-methylthiazole: step 1/1. In terms of biological role, catalyzes the phosphorylation of the hydroxyl group of 4-methyl-5-beta-hydroxyethylthiazole (THZ). This is Hydroxyethylthiazole kinase from Salmonella schwarzengrund (strain CVM19633).